The primary structure comprises 223 residues: Probable amino-acid ABC transporter permease protein PatM (223 aa).

The 192-residue stretch at 19–210 (LGTTMEMATW…GVVVILTRVQ (192 aa)) folds into the ABC transmembrane type-1 domain. The next 5 helical transmembrane spans lie at 23–43 (MEMA…LANI), 59–78 (ISFF…YYGL), 90–110 (AFSA…AESI), 156–176 (FIDM…EIMA), and 186–206 (FRFF…VVIL).

It belongs to the binding-protein-dependent transport system permease family. HisMQ subfamily.

The protein resides in the cell inner membrane. Functionally, probably part of a binding-protein-dependent transport system for an amino acid. Probably responsible for the translocation of the substrate across the membrane. The protein is Probable amino-acid ABC transporter permease protein PatM (patM) of Vibrio harveyi (Beneckea harveyi).